Consider the following 697-residue polypeptide: Potassium channel KAT2 (697 aa).

Over 1 to 63 (MSISCTRNFF…PFDPRFRGWE (63 aa)) the chain is Cytoplasmic. A helical membrane pass occupies residues 64-84 (MWLVILVIYSAWICPFEFAFI). The Extracellular segment spans residues 85–91 (TYKKDAL). Residues 92-112 (FIIDNIVNGFFAIDIILTFFV) form a helical membrane-spanning segment. Residues 113–134 (AYLDSHSYLLVDKPKKIAIRYL) lie on the Cytoplasmic side of the membrane. A helical membrane pass occupies residues 135–155 (STWFAFDVCSTAPFQSLSLLF). The Extracellular portion of the chain corresponds to 156-165 (KYNGSEIGFR). N158 is a glycosylation site (N-linked (GlcNAc...) asparagine). The helical; Voltage-sensor transmembrane segment at 166 to 186 (VLSMLRLWRLRRVSSLFARLE) threads the bilayer. At 187-200 (KDIRFNYFWTRCTK) the chain is on the cytoplasmic side. A helical transmembrane segment spans residues 201–221 (LISVTLFAVHCAGCFAYLIAD). Residues 222 to 248 (QYHDPTKTWIGAVYPNFKETSVWSRYV) are Extracellular-facing. An intramembrane region (pore-forming) is located at residues 249–268 (TALYWSITTLTTTGYGDLHA). The Extracellular portion of the chain corresponds to 269-272 (ENPR). The helical transmembrane segment at 273-293 (EMLFFVFFMLFNLGFTSYLIG) threads the bilayer. Topologically, residues 294 to 697 (NMTNLVVHWT…HLYILINENS (404 aa)) are cytoplasmic. Residue 377-496 (LFHGVSRNFL…RVIMNNLFMK (120 aa)) participates in a nucleoside 3',5'-cyclic phosphate binding. Positions 629–697 (RVTIHLKSRD…HLYILINENS (69 aa)) constitute a KHA domain.

The protein belongs to the potassium channel family. Plant (TC 1.A.1.4) subfamily. In terms of assembly, the potassium channel is probably composed of a homo- or heterotetrameric complex of pore-forming subunits. May interact with KAT1. Interacts with SLAC1. In terms of tissue distribution, expressed in guard cells of hypocotyls, stems leaves and petioles. Detected also in the phloem of minor veins and in flower at a lower level.

It localises to the membrane. Its function is as follows. Highly selective inward-rectifying potassium channel. This voltage-dependent channel could mediate long-term potassium influx into guard cells leading to stomatal opening. Assuming opened or closed conformations in response to the voltage difference across the membrane, the channel is activated by hyperpolarization. The channel activity is enhanced upon external acidification. In Arabidopsis thaliana (Mouse-ear cress), this protein is Potassium channel KAT2 (KAT2).